Reading from the N-terminus, the 206-residue chain is RNA-binding protein (206 aa).

Positions 87–206 are disordered; the sequence is PRGMQRGNRR…SGAKSKRRPR (120 aa). Basic and acidic residues predominate over residues 109 to 132; the sequence is MPKDDSNDRKKAKTSKDRKVEKSS.

The protein belongs to the phytoreovirus RNA-binding protein family.

It is found in the host cytoplasm. Functionally, constituent of viral factories. Binds to ssRNA and dsRNA. The polypeptide is RNA-binding protein (Rice gall dwarf virus (RGDV)).